The chain runs to 295 residues: Nucleotide-binding protein MCA0739 (295 aa).

8 to 15 (GFSGSGKS) contacts ATP. GTP is bound at residue 60 to 63 (DARN).

It belongs to the RapZ-like family.

Displays ATPase and GTPase activities. The polypeptide is Nucleotide-binding protein MCA0739 (Methylococcus capsulatus (strain ATCC 33009 / NCIMB 11132 / Bath)).